Here is a 234-residue protein sequence, read N- to C-terminus: Myelin protein zero-like protein 3 (234 aa).

The signal sequence occupies residues 1–31; sequence MQQSGVPGSRGCALCPLLGVLFFQGVYVIFS. Residues 32–148 form the Ig-like V-type domain; sequence LEIKADAHVR…NIPATELTVT (117 aa). Residues 32-158 lie on the Extracellular side of the membrane; it reads LEIKADAHVR…ERGFGTMLSS (127 aa). A disulfide bridge connects residues cysteine 52 and cysteine 128. Residue asparagine 123 is glycosylated (N-linked (GlcNAc...) asparagine). Residues 159–179 traverse the membrane as a helical segment; that stretch reads VALLSILVFIPSTVVVILLLV. Topologically, residues 180 to 234 are cytoplasmic; it reads RMGRKSAGLKKRSKSGYKKSSIEVSDDTDQEGDDCMAKLCVRCAECVDSDYEETY.

This sequence belongs to the myelin P0 protein family.

It is found in the membrane. Functionally, mediates homophilic cell-cell adhesion. This Bos taurus (Bovine) protein is Myelin protein zero-like protein 3 (MPZL3).